We begin with the raw amino-acid sequence, 156 residues long: ATP synthase subunit b (156 aa).

A helical membrane pass occupies residues 5 to 25 (LTLIGQAIAFAIFVAFCMKFV).

It belongs to the ATPase B chain family. As to quaternary structure, F-type ATPases have 2 components, F(1) - the catalytic core - and F(0) - the membrane proton channel. F(1) has five subunits: alpha(3), beta(3), gamma(1), delta(1), epsilon(1). F(0) has three main subunits: a(1), b(2) and c(10-14). The alpha and beta chains form an alternating ring which encloses part of the gamma chain. F(1) is attached to F(0) by a central stalk formed by the gamma and epsilon chains, while a peripheral stalk is formed by the delta and b chains.

The protein localises to the cell inner membrane. Its function is as follows. F(1)F(0) ATP synthase produces ATP from ADP in the presence of a proton or sodium gradient. F-type ATPases consist of two structural domains, F(1) containing the extramembraneous catalytic core and F(0) containing the membrane proton channel, linked together by a central stalk and a peripheral stalk. During catalysis, ATP synthesis in the catalytic domain of F(1) is coupled via a rotary mechanism of the central stalk subunits to proton translocation. Component of the F(0) channel, it forms part of the peripheral stalk, linking F(1) to F(0). In Acinetobacter baylyi (strain ATCC 33305 / BD413 / ADP1), this protein is ATP synthase subunit b.